The sequence spans 100 residues: Putative antiporter subunit mnhF2 (100 aa).

3 helical membrane passes run F5–L25, V38–N60, and L65–G87.

This sequence belongs to the CPA3 antiporters (TC 2.A.63) subunit F family. May form a heterooligomeric complex that consists of seven subunits: mnhA2, mnhB2, mnhC2, mnhD2, mnhE2, mnhF2 and mnhG2.

It localises to the cell membrane. The sequence is that of Putative antiporter subunit mnhF2 (mnhF2) from Staphylococcus epidermidis (strain ATCC 35984 / DSM 28319 / BCRC 17069 / CCUG 31568 / BM 3577 / RP62A).